A 319-amino-acid polypeptide reads, in one-letter code: Olfactory receptor 56B4 (319 aa).

Residues M1–H31 are Extracellular-facing. Residues W32 to I52 form a helical membrane-spanning segment. At I53–V60 the chain is on the cytoplasmic side. A helical membrane pass occupies residues L61–T81. Residues T82–A105 lie on the Extracellular side of the membrane. Residues C103 and C195 are joined by a disulfide bond. The helical transmembrane segment at Q106 to V126 threads the bilayer. Residues D127–A145 lie on the Cytoplasmic side of the membrane. The helical transmembrane segment at F146–P166 threads the bilayer. The Extracellular portion of the chain corresponds to I167–K202. The helical transmembrane segment at F203–S223 threads the bilayer. The Cytoplasmic segment spans residues Y224–A243. A helical transmembrane segment spans residues L244–L263. Residues S264–P277 are Extracellular-facing. The chain crosses the membrane as a helical span at residues V278–L298. Residues R299–K319 are Cytoplasmic-facing.

It belongs to the G-protein coupled receptor 1 family.

It is found in the cell membrane. Odorant receptor. In Homo sapiens (Human), this protein is Olfactory receptor 56B4 (OR56B4).